The primary structure comprises 500 residues: Farnesylcysteine lyase (500 aa).

Positions 1–24 (MKDFPIAISLLFALLSPVLLPCSG) are cleaved as a signal peptide. N-linked (GlcNAc...) asparagine glycosylation is found at N56, N113, N211, and N281.

This sequence belongs to the prenylcysteine oxidase family. FAD is required as a cofactor. In terms of tissue distribution, expressed in seedilings, flowers, stems, leaves and roots.

It is found in the lysosome. It catalyses the reaction S-(2E,6E)-farnesyl-L-cysteine + O2 + H2O = (2E,6E)-farnesal + L-cysteine + H2O2. Its function is as follows. Involved in the degradation of prenylcysteine. Cleaves specifically the thioether bond of S-farnesyl-L-cysteine and has no activity with S-geranylgeranyl-L-cysteine. Also recognizes N-acetyl-farnesylcysteine and may have a role in deprenylation of farnesylated proteins. This is Farnesylcysteine lyase from Arabidopsis thaliana (Mouse-ear cress).